Consider the following 210-residue polypeptide: High mobility group protein B2 (210 aa).

Residue lysine 3 is modified to N6-acetyllysine. A DNA-binding region (HMG box 1) is located at residues 9-79 (PRGKMSSYAF…RYDREMKNYV (71 aa)). Cysteine 23 is modified (cysteine sulfonic acid (-SO3H); alternate). An intrachain disulfide couples cysteine 23 to cysteine 45. An N6-acetyllysine modification is found at lysine 30. The residue at position 35 (serine 35) is a Phosphoserine. Residue lysine 43 is modified to N6-acetyllysine. Position 45 is a cysteine sulfonic acid (-SO3H); alternate (cysteine 45). Residues 71–102 (YDREMKNYVPPKGDKKGKKKDPNAPKRPPSAF) are disordered. The residue at position 90 (lysine 90) is an N6-acetyllysine. The segment at residues 95 to 163 (PKRPPSAFFL…KYEKDIAAYR (69 aa)) is a DNA-binding region (HMG box 2). Serine 100 is subject to Phosphoserine. Cysteine sulfonic acid (-SO3H) is present on cysteine 106. Residues lysine 114 and lysine 141 each carry the N6-acetyllysine modification. Over residues 162–172 (YRAKGKSEAGK) the composition is skewed to basic and acidic residues. The segment at 162-210 (YRAKGKSEAGKKGPGRPTGSKKKNEPEDEEEEEEEEEEEDDEEEEEDEE) is disordered. Residues 165-180 (KGKSEAGKKGPGRPTG) form a required for chemotactic activity region. The segment covering 187–210 (PEDEEEEEEEEEEEDDEEEEEDEE) has biased composition (acidic residues).

Belongs to the HMGB family. As to quaternary structure, interacts with POU2F2, POU2F1 and POU3F1. Component of the RAG complex composed of core components RAG1 and RAG2, and associated component HMGB1 or HMGB2. Component of the SET complex, composed of at least ANP32A, APEX1, HMGB2, NME1, SET and TREX1. Directly interacts with SET. Interacts with LEF1. Post-translationally, reduction/oxidation of cysteine residues Cys-23, Cys-45 and Cys-106 and a possible intramolecular disulfide bond involving Cys-23 and Cys-45 give rise to different redox forms with specific functional activities in various cellular compartments: 1- fully reduced HMGB2 (HMGB2C23hC45hC106h), 2- disulfide HMGB2 (HMGB2C23-C45C106h) and 3- sulfonyl HMGB2 (HMGB2C23soC45soC106so). Widely expressed in embryo. In adult mainly expressed in lymphoid organs and testes. Expressed in primary spermatocytes. Expressed in the superficial zone of articular cartilage.

The protein resides in the nucleus. It localises to the chromosome. The protein localises to the cytoplasm. Its subcellular location is the secreted. Functionally, multifunctional protein with various roles in different cellular compartments. May act in a redox sensitive manner. In the nucleus is an abundant chromatin-associated non-histone protein involved in transcription, chromatin remodeling and V(D)J recombination and probably other processes. Binds DNA with a preference to non-canonical DNA structures such as single-stranded DNA. Can bent DNA and enhance DNA flexibility by looping thus providing a mechanism to promote activities on various gene promoters by enhancing transcription factor binding and/or bringing distant regulatory sequences into close proximity. Involved in V(D)J recombination by acting as a cofactor of the RAG complex: acts by stimulating cleavage and RAG protein binding at the 23 bp spacer of conserved recombination signal sequences (RSS). Proposed to be involved in the innate immune response to nucleic acids by acting as a cytoplasmic promiscuous immunogenic DNA/RNA sensor which cooperates with subsequent discriminative sensing by specific pattern recognition receptors. In the extracellular compartment acts as a chemokine. Promotes proliferation and migration of endothelial cells implicating AGER/RAGE. Has antimicrobial activity in gastrointestinal epithelial tissues. Involved in inflammatory response to antigenic stimulus coupled with pro-inflammatory activity. May play a role in germ cell differentiation. Involved in modulation of neurogenesis probably by regulation of neural stem proliferation. Involved in articular cartilage surface maintenance implicating LEF1 and the Wnt/beta-catenin pathway. The sequence is that of High mobility group protein B2 (Hmgb2) from Mus musculus (Mouse).